The sequence spans 121 residues: Large ribosomal subunit protein uL22 (121 aa).

This sequence belongs to the universal ribosomal protein uL22 family. Part of the 50S ribosomal subunit.

In terms of biological role, this protein binds specifically to 23S rRNA; its binding is stimulated by other ribosomal proteins, e.g. L4, L17, and L20. It is important during the early stages of 50S assembly. It makes multiple contacts with different domains of the 23S rRNA in the assembled 50S subunit and ribosome. The globular domain of the protein is located near the polypeptide exit tunnel on the outside of the subunit, while an extended beta-hairpin is found that lines the wall of the exit tunnel in the center of the 70S ribosome. The chain is Large ribosomal subunit protein uL22 from Paenarthrobacter aurescens (strain TC1).